We begin with the raw amino-acid sequence, 261 residues long: tRNA (guanine-N(7)-)-methyltransferase (261 aa).

The S-adenosyl-L-methionine site is built by Glu75, Glu100, Asp127, and Asp150. The active site involves Asp150. Lys154 lines the substrate pocket. Residues 156 to 161 form an interaction with RNA region; the sequence is RHNKRR. Substrate-binding positions include Asp186 and 223–226; that span reads THFE.

The protein belongs to the class I-like SAM-binding methyltransferase superfamily. TrmB family.

It catalyses the reaction guanosine(46) in tRNA + S-adenosyl-L-methionine = N(7)-methylguanosine(46) in tRNA + S-adenosyl-L-homocysteine. Its pathway is tRNA modification; N(7)-methylguanine-tRNA biosynthesis. Catalyzes the formation of N(7)-methylguanine at position 46 (m7G46) in tRNA. The polypeptide is tRNA (guanine-N(7)-)-methyltransferase (Xanthomonas axonopodis pv. citri (strain 306)).